Reading from the N-terminus, the 524-residue chain is Protein tweety homolog 3 (524 aa).

The Extracellular portion of the chain corresponds to Met-1–Ala-42. A helical transmembrane segment spans residues Leu-43–Phe-63. Topologically, residues Tyr-64–Thr-86 are cytoplasmic. Residues Ala-87–Gly-107 traverse the membrane as a helical segment. Topologically, residues Asn-108 to Leu-211 are extracellular. Residues Glu-110 and Asp-113 each coordinate Ca(2+). Asn-126 and Asn-144 each carry an N-linked (GlcNAc...) asparagine glycan. Residues Gly-212 to Ile-232 traverse the membrane as a helical segment. The Cytoplasmic portion of the chain corresponds to Arg-233–Lys-236. Residues Gly-237–Leu-257 form a helical membrane-spanning segment. Over Gly-258–Glu-386 the chain is Extracellular. 2 disulfide bridges follow: Cys-271–Cys-381 and Cys-299–Cys-366. A glycan (N-linked (GlcNAc...) asparagine) is linked at Asn-351. Residues Gly-387–Cys-407 form a helical membrane-spanning segment. At Ser-408–His-524 the chain is on the cytoplasmic side. Disordered regions lie at residues Trp-413–His-435 and Arg-485–His-524. At Ser-496 the chain carries Phosphoserine. The PY-motif; mediates interaction with NEDD4L motif lies at Pro-498–Tyr-501. Over residues Tyr-501–His-524 the composition is skewed to polar residues. Phosphoserine occurs at positions 504 and 522.

It belongs to the tweety family. As to quaternary structure, homotetramer; disulfide-linked. Forms cis-homodimers in the presence of Ca(2+). Interacts with NEDD4L. In terms of processing, ubiquitinated by NEDD4L. N-glycosylated. In terms of tissue distribution, expressed in excitable tissues. Expressed in the brain, heart, skeletal muscle, colon, spleen, kidney and peripheral blood leukocytes. Also expressed in fat, the pancreas, thymus, and uterus.

Its subcellular location is the cell membrane. The catalysed reaction is chloride(in) = chloride(out). The enzyme catalyses L-glutamate(out) = L-glutamate(in). With respect to regulation, inhibited by (4-[(2-butyl-6,7-dichloro-2- cyclopentyl-2,3-dihydro-1-oxo-1H-inden-5-yl)oxy]butanoic acid), genistein and PD98059 (MEK1 inhibitor). Functionally, calcium-independent, swelling-dependent volume-regulated anion channel (VRAC-swell) which plays a pivotal role in the process of regulatory volume decrease (RVD) in the brain through the efflux of anions like chloride and organic osmolytes like glutamate. Probable large-conductance Ca(2+)-activated chloride channel. In Mus musculus (Mouse), this protein is Protein tweety homolog 3 (Ttyh3).